Here is a 228-residue protein sequence, read N- to C-terminus: MSYVFVNDSSQTNVPLLQACIDGDFNYSKRLLESGFDPNIRDSRGRTGLHLAAARGNVDICQLLHKFGADLLATDYQGNTALHLCGHVDTIQFLVSNGLKIDICNHQGATPLVLAKRRGVNKDVIRLLEFLEEQEVKGFNRGTHSKLETMQTAESESAMESHSLLNPNLQQGEGVLSSFRTTWQEFVEDLGFWRVLLLIFVIALLSLGIAYYVSGVLPFVENQPELVH.

ANK repeat units follow at residues 11–40 (QTNVPLLQACIDGDFNYSKRLLESGFDPNI), 44–73 (RGRTGLHLAAARGNVDICQLLHKFGADLLA), 77–103 (QGNTALHLCGHVDTIQFLVSNGLKIDI), and 107–138 (QGATPLVLAKRRGVNKDVIRLLEFLEEQEVKG). The helical transmembrane segment at 195 to 215 (VLLLIFVIALLSLGIAYYVSG) threads the bilayer.

Its subcellular location is the membrane. In Pongo abelii (Sumatran orangutan), this protein is Ankyrin repeat domain-containing protein 46 (ANKRD46).